Reading from the N-terminus, the 363-residue chain is Ribonuclease P protein subunit p40 (363 aa).

Component of nuclear RNase P and RNase MRP ribonucleoproteins. RNase P consists of a catalytic RNA moiety and about 10 protein subunits; POP1, POP4, POP5, POP7, RPP14, RPP21, RPP25, RPP30, RPP38 and RPP40. Within the RNase P complex, POP1, POP7 and RPP25 form the 'finger' subcomplex, POP5, RPP14, RPP40 and homodimeric RPP30 form the 'palm' subcomplex, and RPP21, POP4 and RPP38 form the 'wrist' subcomplex. All subunits of the RNase P complex interact with the catalytic RNA. Several subunits of RNase P are also part of the RNase MRP complex. RNase MRP consists of a catalytic RNA moiety and about 8 protein subunits; POP1, POP7, RPP25, RPP30, RPP38, RPP40 and possibly also POP4 and POP5.

It is found in the nucleus. It localises to the nucleolus. Component of ribonuclease P, a ribonucleoprotein complex that generates mature tRNA molecules by cleaving their 5'-ends. Also a component of the MRP ribonuclease complex, which cleaves pre-rRNA sequences. This is Ribonuclease P protein subunit p40 (Rpp40) from Rattus norvegicus (Rat).